A 136-amino-acid polypeptide reads, in one-letter code: UPF0310 protein HH_1062 (136 aa).

Belongs to the UPF0310 family.

This Helicobacter hepaticus (strain ATCC 51449 / 3B1) protein is UPF0310 protein HH_1062.